The chain runs to 65 residues: Hainantoxin-X.2 (65 aa).

Positions 1-20 (MNVKILVLVAVLCLVVSTHA) are cleaved as a signal peptide. A propeptide spanning residues 21–37 (ERHSKTDMEDSPMIQER) is cleaved from the precursor. Disulfide bonds link Cys-39/Cys-56, Cys-46/Cys-59, and Cys-55/Cys-64.

It belongs to the neurotoxin 36 family. 02 subfamily. In terms of tissue distribution, expressed by the venom gland.

The protein resides in the secreted. Functionally, reversibly blocks N-type calcium channels (Cav2.2/CACNA1B) in rat dorsal root ganglion cells. Elicits no toxic symptoms in either vertebrates or invertebrates during a period of 48 hours post-injection, when it was assayed in vivo by direct injection into mice and cockroaches. The sequence is that of Hainantoxin-X.2 from Cyriopagopus hainanus (Chinese bird spider).